The primary structure comprises 297 residues: MTDIIPENVNNSKITIICSAPDLASQNIKNHLLNLTEWKNLELPPESRFSAARESIDGKFRLVDIEEIHVFQDGLDRKLEAAGLPASLIIFASKHRSKEEINSLTVHCTGNPSGEARLGGHPKELAVSSPAAMKSILSGMKKLAGEKELKYDVTLEVTHHGPTELSVPSIYAEIGSTEKQWEDPDAGEVAAKSILAVSLEKVPVAVGFGGGHYAMRQTGLLLETKISFGHNFPKYQLEFVDEALVRQAVEKSGAEFAYFDRKSMKSEDRKKISEILEKLGLRVLKESEIRENYGLDD.

The protein belongs to the DtdA deacylase family. Monomer. Zn(2+) serves as cofactor.

It carries out the reaction a D-aminoacyl-tRNA + H2O = a tRNA + a D-alpha-amino acid + H(+). The enzyme catalyses glycyl-tRNA(Ala) + H2O = tRNA(Ala) + glycine + H(+). In terms of biological role, D-aminoacyl-tRNA deacylase with broad substrate specificity. By recycling D-aminoacyl-tRNA to D-amino acids and free tRNA molecules, this enzyme counteracts the toxicity associated with the formation of D-aminoacyl-tRNA entities in vivo. The protein is D-aminoacyl-tRNA deacylase of Methanosarcina mazei (strain ATCC BAA-159 / DSM 3647 / Goe1 / Go1 / JCM 11833 / OCM 88) (Methanosarcina frisia).